The sequence spans 391 residues: Phosphoprotein (391 aa).

Residues Thr10 and Thr16 each carry the phosphothreonine modification. Polar residues predominate over residues 54–65 (QKNIQHPTASHQ). 2 disordered regions span residues 54–97 (QKNI…PEPL) and 148–185 (PVTE…ERSG). Ser69 carries the phosphoserine modification. Thr91, Thr150, and Thr165 each carry phosphothreonine. Ser188 carries the phosphoserine modification. Residues 216–279 (ISANEIMDLL…MATVKIMDPG (64 aa)) are multimerization. A coiled-coil region spans residues 218–245 (ANEIMDLLRGMDARLQHLEQKVDKVLAQ). Thr250 is modified (phosphothreonine). Ser257 bears the Phosphoserine mark. A phosphothreonine mark is found at Thr258 and Thr282. 2 positions are modified to phosphoserine: Ser292 and Ser294. Position 298 is a phosphothreonine (Thr298). 2 positions are modified to phosphoserine: Ser301 and Ser374. Positions 343–391 (AGRKVMITKMITDCVANPQMKQAFEQRLAKASTEDALNDIKRDIIRSAI) are interaction with the nucleoprotein. Thr375 bears the Phosphothreonine mark.

Belongs to the rubulavirus/avulavirus P protein family. Homotetramer. Interacts (via multimerization domain) with polymerase L; this interaction forms the polymerase L-P complex. Interacts (via N-terminus) with N0 (via Ncore); this interaction allows P to chaperon N0 to avoid N polymerization before encapsidation. Interacts (via C-terminus) with N-RNA template; this interaction positions the polymerase on the template for both transcription and replication. Interacts with host RPS6KB1 kinase; this interaction may play a role in the viral replication and transcription.

Essential cofactor of the RNA polymerase L that plays a central role in the transcription and replication by forming the polymerase complex with RNA polymerase L and recruiting L to the genomic N-RNA template for RNA synthesis. Also plays a central role in the encapsidation of nascent RNA chains by forming the encapsidation complex with the nucleocapsid protein N (N-P complex). Acts as a chaperone for newly synthesized free N protein, so-called N0, allowing encapsidation of nascent RNA chains during replication. The nucleoprotein protein N prevents excessive phosphorylation of P, which leads to down-regulation of viral transcription/ replication. Participates, together with N, in the formation of viral factories (viroplasms), which are large inclusions in the host cytoplasm where replication takes place. This Homo sapiens (Human) protein is Phosphoprotein (P/V).